Here is a 94-residue protein sequence, read N- to C-terminus: Ribonuclease P protein component 1 (94 aa).

The protein belongs to the eukaryotic/archaeal RNase P protein component 1 family. In terms of assembly, consists of a catalytic RNA component and at least 4-5 protein subunits.

It is found in the cytoplasm. The catalysed reaction is Endonucleolytic cleavage of RNA, removing 5'-extranucleotides from tRNA precursor.. Its function is as follows. Part of ribonuclease P, a protein complex that generates mature tRNA molecules by cleaving their 5'-ends. This Haloarcula marismortui (strain ATCC 43049 / DSM 3752 / JCM 8966 / VKM B-1809) (Halobacterium marismortui) protein is Ribonuclease P protein component 1.